An 87-amino-acid polypeptide reads, in one-letter code: Co-chaperonin GroES (87 aa).

It belongs to the GroES chaperonin family. In terms of assembly, heptamer of 7 subunits arranged in a ring. Interacts with the chaperonin GroEL.

Its subcellular location is the cytoplasm. Together with the chaperonin GroEL, plays an essential role in assisting protein folding. The GroEL-GroES system forms a nano-cage that allows encapsulation of the non-native substrate proteins and provides a physical environment optimized to promote and accelerate protein folding. GroES binds to the apical surface of the GroEL ring, thereby capping the opening of the GroEL channel. This Campylobacter hominis (strain ATCC BAA-381 / DSM 21671 / CCUG 45161 / LMG 19568 / NCTC 13146 / CH001A) protein is Co-chaperonin GroES.